The chain runs to 432 residues: 7-dehydrocholesterol reductase (432 aa).

9 consecutive transmembrane segments (helical) span residues 12 to 34 (YASM…YTMV), 64 to 86 (LIAW…LLPG), 107 to 126 (LAAY…FGIF), 136 to 155 (GEIF…LLYI), 195 to 212 (FTNC…AVTY), 227 to 249 (MLVN…AGYW), 261 to 283 (FYIC…MYLV), 287 to 309 (VELG…YINY), and 371 to 393 (SAFF…VIFL).

Belongs to the ERG4/ERG24 family.

It localises to the endoplasmic reticulum membrane. It carries out the reaction cholesterol + NADP(+) = 7-dehydrocholesterol + NADPH + H(+). It functions in the pathway lipid metabolism; steroid biosynthesis. In terms of biological role, production of cholesterol by reduction of C7-C8 double bond of 7-dehydrocholesterol (7-DHC). Lesions in the gene coding for the enzyme cause dwarfism. The protein is 7-dehydrocholesterol reductase (DWF5) of Arabidopsis thaliana (Mouse-ear cress).